A 163-amino-acid polypeptide reads, in one-letter code: Xanthine-guanine phosphoribosyltransferase (163 aa).

Residues 43–44 (RG) and 95–103 (DDLVDTGGT) each bind 5-phospho-alpha-D-ribose 1-diphosphate. Mg(2+) is bound at residue D96. The guanine site is built by D99 and I142. Residues D99 and I142 each contribute to the xanthine site. Residues 99–103 (DTGGT) and 141–142 (WI) contribute to the GMP site.

This sequence belongs to the purine/pyrimidine phosphoribosyltransferase family. XGPT subfamily. In terms of assembly, homotetramer. Requires Mg(2+) as cofactor.

The protein localises to the cell inner membrane. The catalysed reaction is GMP + diphosphate = guanine + 5-phospho-alpha-D-ribose 1-diphosphate. It carries out the reaction XMP + diphosphate = xanthine + 5-phospho-alpha-D-ribose 1-diphosphate. The enzyme catalyses IMP + diphosphate = hypoxanthine + 5-phospho-alpha-D-ribose 1-diphosphate. Its pathway is purine metabolism; GMP biosynthesis via salvage pathway; GMP from guanine: step 1/1. The protein operates within purine metabolism; XMP biosynthesis via salvage pathway; XMP from xanthine: step 1/1. Its function is as follows. Purine salvage pathway enzyme that catalyzes the transfer of the ribosyl-5-phosphate group from 5-phospho-alpha-D-ribose 1-diphosphate (PRPP) to the N9 position of the 6-oxopurines guanine and xanthine to form the corresponding ribonucleotides GMP (guanosine 5'-monophosphate) and XMP (xanthosine 5'-monophosphate), with the release of PPi. To a lesser extent, also acts on hypoxanthine. This Nitratidesulfovibrio vulgaris (strain DP4) (Desulfovibrio vulgaris) protein is Xanthine-guanine phosphoribosyltransferase.